A 110-amino-acid polypeptide reads, in one-letter code: Iron-sulfur cluster assembly protein CyaY (110 aa).

This sequence belongs to the frataxin family.

In terms of biological role, involved in iron-sulfur (Fe-S) cluster assembly. May act as a regulator of Fe-S biogenesis. The protein is Iron-sulfur cluster assembly protein CyaY of Ectopseudomonas mendocina (strain ymp) (Pseudomonas mendocina).